A 213-amino-acid chain; its full sequence is Large ribosomal subunit protein uL1 (213 aa).

Belongs to the universal ribosomal protein uL1 family. As to quaternary structure, part of the 50S ribosomal subunit.

Binds directly to 23S rRNA. Probably involved in E site tRNA release. Its function is as follows. Protein L1 is also a translational repressor protein, it controls the translation of its operon by binding to its mRNA. The polypeptide is Large ribosomal subunit protein uL1 (Methanococcus maripaludis (strain DSM 14266 / JCM 13030 / NBRC 101832 / S2 / LL)).